The following is a 614-amino-acid chain: UvrABC system protein C (614 aa).

Residues 26-104 (NLPGVYKMLG…IKEHRPPYNV (79 aa)) enclose the GIY-YIG domain. In terms of domain architecture, UVR spans 215 to 250 (SDIHTTLIEKMEHSAEALDFEKAAFYRDQLSMLREV).

This sequence belongs to the UvrC family. In terms of assembly, interacts with UvrB in an incision complex.

Its subcellular location is the cytoplasm. The UvrABC repair system catalyzes the recognition and processing of DNA lesions. UvrC both incises the 5' and 3' sides of the lesion. The N-terminal half is responsible for the 3' incision and the C-terminal half is responsible for the 5' incision. In Psychrobacter sp. (strain PRwf-1), this protein is UvrABC system protein C.